The chain runs to 780 residues: MLPNNQWQIPINNGLTHQENMAAHAAVMKLRVHDLQSIISQLSLRKPRPQKSEHQKVVVESLRDPHHARQIYQMASNFPNGNYEMQKRPATTSQVRSHPYVLPSRSGASNHLVNHHYQQQQQQQPQPHNLLHQQMMASHHSHLQQQHHPSTVRWLTPELLEEQLRGSMRYGAPAAAAATNAPLHSSFPNHGRSSQQSLQKSEKSNRPKKMYADNFEPLPLPFYDVISVLLKPVELHSSDSPTLKQTKQLQFPFLLTAEHISKISYRADVTPLPRYELQLRFFNLTEPVQGPQKDDFPLNCYARVDDSVVQLPNVIPTNKTNAEPKRPSRPVNITSNMNRYKKEHTVAVEWLADKRVWAAGVYFVHRVNSDILFKRLNQNVSRHRSLEVTKQEVIKKLSGGEDDIAMDRLNISLLDPLCKTRMTTPSRCQDCTHLQCFDLLSYLMMNEKKPTWQCPVCSSNCPYDRLIVDDYFLDMLAKVDKNTTEVELKEDGSYDVIKEEAFCISDDDDDDVVPATVNGTASCSSTNGNGLANEAAKKKPADDDIITLSDDDDEELNRGIMNSLNDSFSPGRHTASAELAAQKTPPQQKKKTKDDDIEIITLDDTPPRPVAASANLPMRQMSQQNQMPVGSSPSGMASTQMGMNEGASKTIRDALNKIGEQSANSSTQSSPLVQLHHTTHPLNFAQSSYMNPSSGSQTPTSQYGYSPMINQAPHFQMQNGLIGRNNQMVHMQQHHLQQQQQQQQSPQIMSPSFYAQQQMSNGGAFAYYPPQYPQQQYRQN.

Residues 181–210 (APLHSSFPNHGRSSQQSLQKSEKSNRPKKM) are disordered. The PINIT domain maps to 203-367 (KSNRPKKMYA…AAGVYFVHRV (165 aa)). Residues 400 to 485 (GEDDIAMDRL…LAKVDKNTTE (86 aa)) form an SP-RING-type zinc finger. Residues Cys-431, His-433, Cys-454, and Cys-457 each contribute to the Zn(2+) site. A compositionally biased stretch (polar residues) spans 519-530 (GTASCSSTNGNG). 3 disordered regions span residues 519–544 (GTASCSSTNGNGLANEAAKKKPADDD), 560–594 (IMNSLNDSFSPGRHTASAELAAQKTPPQQKKKTKD), and 732–755 (QQHHLQQQQQQQQSPQIMSPSFYA). Residues 732-749 (QQHHLQQQQQQQQSPQIM) show a composition bias toward low complexity.

This sequence belongs to the PIAS family. May interact with gex-3.

Its pathway is protein modification; protein sumoylation. Functions as an E3-type smo-1 ligase. Mediates smo-1 conjugation to air-2 in vitro and is required for proper chromosome alignment. In the early embryo, specifically suppresses checkpoint activation in response to DNA damage, maybe by promoting mus-101 sumoylation. In embryos, plays a role in determining telomere localization in the nucleus. Acts with pie-1 to promote piRNA-mediated silencing and fertility in the adult germline. The polypeptide is E3 SUMO-protein ligase gei-17 (Caenorhabditis elegans).